Consider the following 450-residue polypeptide: UDP-N-acetylmuramoylalanine--D-glutamate ligase (450 aa).

An ATP-binding site is contributed by 119–125 (GSNGKTT).

This sequence belongs to the MurCDEF family.

It localises to the cytoplasm. It carries out the reaction UDP-N-acetyl-alpha-D-muramoyl-L-alanine + D-glutamate + ATP = UDP-N-acetyl-alpha-D-muramoyl-L-alanyl-D-glutamate + ADP + phosphate + H(+). It functions in the pathway cell wall biogenesis; peptidoglycan biosynthesis. Functionally, cell wall formation. Catalyzes the addition of glutamate to the nucleotide precursor UDP-N-acetylmuramoyl-L-alanine (UMA). In Streptococcus thermophilus (strain CNRZ 1066), this protein is UDP-N-acetylmuramoylalanine--D-glutamate ligase.